A 568-amino-acid polypeptide reads, in one-letter code: 2-succinyl-5-enolpyruvyl-6-hydroxy-3-cyclohexene-1-carboxylate synthase (568 aa).

The protein belongs to the TPP enzyme family. MenD subfamily. In terms of assembly, homodimer. It depends on Mg(2+) as a cofactor. Mn(2+) serves as cofactor. Requires thiamine diphosphate as cofactor.

It carries out the reaction isochorismate + 2-oxoglutarate + H(+) = 5-enolpyruvoyl-6-hydroxy-2-succinyl-cyclohex-3-ene-1-carboxylate + CO2. It participates in quinol/quinone metabolism; 1,4-dihydroxy-2-naphthoate biosynthesis; 1,4-dihydroxy-2-naphthoate from chorismate: step 2/7. The protein operates within cofactor biosynthesis; phylloquinone biosynthesis. Its function is as follows. Catalyzes the thiamine diphosphate-dependent decarboxylation of 2-oxoglutarate and the subsequent addition of the resulting succinic semialdehyde-thiamine pyrophosphate anion to isochorismate to yield 2-succinyl-5-enolpyruvyl-6-hydroxy-3-cyclohexene-1-carboxylate (SEPHCHC). This is 2-succinyl-5-enolpyruvyl-6-hydroxy-3-cyclohexene-1-carboxylate synthase from Synechococcus sp. (strain CC9902).